A 358-amino-acid polypeptide reads, in one-letter code: SPbeta prophage-derived probable integrase/recombinase YopP (358 aa).

The Core-binding (CB) domain maps to 23 to 114 (NKDIRSSSGN…SLKMLYTYLE (92 aa)). Residues 137–319 (KNWDKTTQTE…NIANSAGVTM (183 aa)) enclose the Tyr recombinase domain. Active-site residues include Arg-178, Lys-206, His-268, and His-295. Catalysis depends on Tyr-304, which acts as the O-(3'-phospho-DNA)-tyrosine intermediate.

This sequence belongs to the 'phage' integrase family.

Probable recombinase that does not seem to have a role in chromosome dimer resolution per se but rather may have some facilitative role during chromosome partitioning in general. In Bacillus subtilis (strain 168), this protein is SPbeta prophage-derived probable integrase/recombinase YopP (yopP).